Consider the following 292-residue polypeptide: Tetratricopeptide repeat protein 1 (292 aa).

Composition is skewed to basic and acidic residues over residues 1–12 (MEEKSEDCKVPE) and 47–64 (KAAE…ECFH). The disordered stretch occupies residues 1–125 (MEEKSEDCKV…SAKLKEEGNE (125 aa)). Acidic residues predominate over residues 88 to 98 (SSSELDEEYLI). Position 90 is a phosphoserine (Ser-90). Residues 99 to 125 (ELEKNMPEEEKQKRREESAKLKEEGNE) are compositionally biased toward basic and acidic residues. TPR repeat units lie at residues 116–149 (SAKL…CPAC), 155–188 (SVLF…NPTY), and 189–222 (IRAI…DPSV).

In terms of assembly, interacts with the GAP domain of NF1. Interacts (via TPR repeats) with HSP90AA1 and HSPA8.

The protein is Tetratricopeptide repeat protein 1 (Ttc1) of Mus musculus (Mouse).